The primary structure comprises 424 residues: Vasopressin V1a receptor (424 aa).

Residues 1–40 (MSFPRGSQDRSVGNSSPWWPLTTEGSNGSQEAARLGEGDS) form a disordered region. Residues 1–52 (MSFPRGSQDRSVGNSSPWWPLTTEGSNGSQEAARLGEGDSPLGDVRNEELAK) lie on the Extracellular side of the membrane. Over residues 9 to 30 (DRSVGNSSPWWPLTTEGSNGSQ) the composition is skewed to polar residues. Residue asparagine 27 is glycosylated (N-linked (GlcNAc...) asparagine). A helical membrane pass occupies residues 53-76 (LEIAVLAVIFVVAVLGNSSVLLAL). Residues 77–88 (HRTPRKTSRMHL) lie on the Cytoplasmic side of the membrane. A helical membrane pass occupies residues 89-110 (FIRHLSLADLAVAFFQVLPQLC). Residues 111–125 (WDITYRFRGPDWLCR) lie on the Extracellular side of the membrane. An intrachain disulfide couples cysteine 124 to cysteine 205. A helical transmembrane segment spans residues 126–147 (VVKHLQVFAMFASAYMLVVMTA). Topologically, residues 148 to 168 (DRYIAVCHPLKTLQQPARRSR) are cytoplasmic. A helical transmembrane segment spans residues 169–190 (LMIATSWVLSFILSTPQYFIFS). At 191–220 (VIEIEVNNGTKTQDCWATFIQPWGTRAYVT) the chain is on the extracellular side. The chain crosses the membrane as a helical span at residues 221–241 (WMTSGVFVAPVVVLGTCYGFI). Residues 242-299 (CYHIWRNIRGKTASSRHSKGDKGSGEAVGPFHKGLLVTPCVSSVKSISRAKIRTVKMT) are Cytoplasmic-facing. A helical transmembrane segment spans residues 300-319 (FVIVSAYILCWAPFFIVQMW). Topologically, residues 320-337 (SVWDENFIWTDSENPSIT) are extracellular. A helical membrane pass occupies residues 338 to 357 (ITALLASLNSCCNPWIYMFF). Topologically, residues 358 to 424 (SGHLLQDCVQ…KSIRFIPVST (67 aa)) are cytoplasmic. 2 S-palmitoyl cysteine lipidation sites follow: cysteine 371 and cysteine 372. The tract at residues 383-416 (DSDSMSRRQTSYSNNRSPTNSTGMWKDSPKSSKS) is disordered. Residues 389–405 (RRQTSYSNNRSPTNSTG) show a composition bias toward polar residues. Serine 410 carries the post-translational modification Phosphoserine.

It belongs to the G-protein coupled receptor 1 family. Vasopressin/oxytocin receptor subfamily. In terms of processing, palmitoylated on three cysteine residues, of which only two are identified. As to expression, localized within gonadotropes of the anterior pituitary of the brain. Broadly distributed throughout the cerebral cortex.

The protein localises to the cell membrane. It is found in the cytoplasmic vesicle membrane. Receptor for arginine vasopressin. The activity of this receptor is mediated by G proteins which activate a phosphatidyl-inositol-calcium second messenger system. Involved in social memory formation. The protein is Vasopressin V1a receptor (Avpr1a) of Rattus norvegicus (Rat).